The primary structure comprises 427 residues: Caspase recruitment domain-containing protein 8 (427 aa).

The tract at residues 1 to 23 (MGIPTSSVSEEQESSEGQDSGDI) is disordered. Positions 51–186 (FLGPEGNVDV…FYAVLEKPSF (136 aa)) are ZU5. Positions 51–336 (FLGPEGNVDV…IQLGAASAPP (286 aa)) constitute an FIIND domain. The tract at residues 187-336 (SLMGILLRIA…IQLGAASAPP (150 aa)) is UPA. Residues 336 to 426 (PAFSGAAFVK…YLVSYLRQQS (91 aa)) enclose the CARD domain.

Interacts with DPP9; leading to inhibit activation of the inflammasome. DPP9 acts via formation of a ternary complex, composed of a DPP9 homodimer, one full-length CARD8 protein, and one cleaved C-terminus of CARD8 (Caspase recruitment domain-containing protein 8, C-terminus). Interacts with DPP8; leading to inhibit activation of the inflammasome, probably via formation of a ternary complex with DPP8. Interacts with NLRP3. Interacts with IKBKG/NEMO. Interacts with DRAL. Binds to caspase-1 (CASP1), CARD16/pseudo-ICE and CARD18/ICEBERG. Interacts with NLRP2 (via NACHT domain). In terms of assembly, interacts with the C-terminal part of CARD8 (Caspase recruitment domain-containing protein 8, C-terminus) in absence of pathogens and other damage-associated signals. As to quaternary structure, interacts with the N-terminal part of CARD8 (Caspase recruitment domain-containing protein 8, N-terminus) in absence of pathogens and other damage-associated signals. Homomultimer; forms the CARD8 inflammasome polymeric complex, a filament composed of homopolymers of this form in response to pathogens and other damage-associated signals. The CARD8 inflammasome polymeric complex directly recruits pro-caspase-1 (proCASP1) independently of PYCARD/ASC. Interacts (via CARD domain) with CASP1 (via CARD domain); leading to CASP1 activation. In terms of processing, undergoes autocatalytic processing within the FIIND domain to generate the N-terminal and C-terminal parts, which are associated non-covalently in absence of pathogens and other damage-associated signals. Post-translationally, ubiquitinated by the N-end rule pathway in response to pathogens and other damage-associated signals, leading to its degradation by the proteasome and subsequent release of the cleaved C-terminal part of the protein (Caspase recruitment domain-containing protein 8, C-terminus), which polymerizes and forms the CARD8 inflammasome.

Its subcellular location is the cytoplasm. It is found in the nucleus. The protein resides in the inflammasome. With respect to regulation, CARD8 inflammasome is inhibited by DPP8 and DPP9, which sequester the C-terminal fragment of CARD8 (Caspase recruitment domain-containing protein 8, C-terminus) in a ternary complex, thereby preventing CARD8 oligomerization and activation. CARD8 inflammasome is activated by Val-boroPro (Talabostat, PT-100), an inhibitor of dipeptidyl peptidases DPP8 and DPP9. Val-boroPro relieves inhibition of DPP8 and/or DPP9 by inducing the proteasome-mediated destruction of the N-terminal part of CARD8, releasing its C-terminal part from autoinhibition. Functionally, inflammasome sensor, which mediates inflammasome activation in response to various pathogen-associated signals, leading to subsequent pyroptosis of CD4(+) T-cells and macrophages. Inflammasomes are supramolecular complexes that assemble in the cytosol in response to pathogens and other damage-associated signals and play critical roles in innate immunity and inflammation. Acts as a recognition receptor (PRR): recognizes specific pathogens and other damage-associated signals, such as Val-boroPro inhibitor, and mediates CARD8 inflammasome activation. In response to pathogen-associated signals, the N-terminal part of CARD8 is degraded by the proteasome, releasing the cleaved C-terminal part of the protein (Caspase recruitment domain-containing protein 8, C-terminus), which polymerizes to initiate the formation of the inflammasome complex: the CARD8 inflammasome directly recruits pro-caspase-1 (proCASP1) independently of PYCARD/ASC and promotes caspase-1 (CASP1) activation, which subsequently cleaves and activates inflammatory cytokines IL1B and IL18 and gasdermin-D (GSDMD), leading to pyroptosis. Also acts as a negative regulator of the NLRP3 inflammasome. May also act as an inhibitor of NF-kappa-B activation. Its function is as follows. Constitutes the precursor of the CARD8 inflammasome, which mediates autoproteolytic processing within the FIIND domain to generate the N-terminal and C-terminal parts, which are associated non-covalently in absence of pathogens and other damage-associated signals. In terms of biological role, regulatory part that prevents formation of the CARD8 inflammasome: in absence of pathogens and other damage-associated signals, interacts with the C-terminal part of CARD8 (Caspase recruitment domain-containing protein 8, C-terminus), preventing activation of the CARD8 inflammasome. In response to pathogen-associated signals, this part is ubiquitinated by the N-end rule pathway and degraded by the proteasome, releasing the cleaved C-terminal part of the protein, which polymerizes and forms the CARD8 inflammasome. Constitutes the active part of the CARD8 inflammasome. In absence of pathogens and other damage-associated signals, interacts with the N-terminal part of CARD8 (Caspase recruitment domain-containing protein 8, N-terminus), preventing activation of the CARD8 inflammasome. In response to pathogen-associated signals, the N-terminal part of CARD8 is degraded by the proteasome, releasing this form, which polymerizes to form the CARD8 inflammasome complex: the CARD8 inflammasome complex then directly recruits pro-caspase-1 (proCASP1) and promotes caspase-1 (CASP1) activation, leading to gasdermin-D (GSDMD) cleavage and subsequent pyroptosis. The chain is Caspase recruitment domain-containing protein 8 from Pongo abelii (Sumatran orangutan).